A 551-amino-acid chain; its full sequence is Cysteine desulfurase SufS (551 aa).

Residues 1–22 form the signal peptide; sequence MRPSSAAWICLLLRIANYTCYS. An N6-(pyridoxal phosphate)lysine modification is found at Lys-327. The active-site Cysteine persulfide intermediate is the Cys-500.

This sequence belongs to the class-V pyridoxal-phosphate-dependent aminotransferase family. Csd subfamily. As to quaternary structure, monomer. Interacts with SufE; interaction enhances cysteine desulfurase activity of SufS. Pyridoxal 5'-phosphate serves as cofactor.

The protein resides in the plastid. The protein localises to the apicoplast. The catalysed reaction is (sulfur carrier)-H + L-cysteine = (sulfur carrier)-SH + L-alanine. It participates in cofactor biosynthesis; iron-sulfur cluster biosynthesis. Catalyzes sulfur activation and mobilization in sulfur mobilization (SUF) pathway for iron-sulfur (Fe-S) cluster biogenesis. Active when in complex with a partner protein SufE. Required for apicoplast maintenance. Plays a role in the development of sporozoites in oocysts in mosquitoes. The polypeptide is Cysteine desulfurase SufS (Plasmodium vivax).